A 105-amino-acid polypeptide reads, in one-letter code: uncharacterized protein (105 aa).

The protein localises to the cytoplasm. It localises to the nucleus. This is an uncharacterized protein from Schizosaccharomyces pombe (strain 972 / ATCC 24843) (Fission yeast).